Here is a 176-residue protein sequence, read N- to C-terminus: Ribosome maturation factor RimM (176 aa).

Residues 96–176 (PADEFYWRDL…QILVDWDPDF (81 aa)) form the PRC barrel domain.

Belongs to the RimM family. In terms of assembly, binds ribosomal protein uS19.

It localises to the cytoplasm. Functionally, an accessory protein needed during the final step in the assembly of 30S ribosomal subunit, possibly for assembly of the head region. Essential for efficient processing of 16S rRNA. May be needed both before and after RbfA during the maturation of 16S rRNA. It has affinity for free ribosomal 30S subunits but not for 70S ribosomes. The polypeptide is Ribosome maturation factor RimM (Shewanella baltica (strain OS223)).